A 345-amino-acid polypeptide reads, in one-letter code: D-amino-acid oxidase (345 aa).

FAD is bound by residues serine 10, isoleucine 13, serine 49, glycine 53, and asparagine 55. (R)-lactate-binding residues include tyrosine 230 and arginine 290. 2 residues coordinate anthranilate: tyrosine 230 and arginine 290. The FAD site is built by arginine 290, serine 317, glycine 320, tyrosine 321, and glutamine 322. The Microbody targeting signal motif lies at 343–345; it reads AKL.

It belongs to the DAMOX/DASOX family. Requires FAD as cofactor.

Its subcellular location is the peroxisome matrix. The catalysed reaction is a D-alpha-amino acid + O2 + H2O = a 2-oxocarboxylate + H2O2 + NH4(+). It catalyses the reaction D-methionine + O2 + H2O = 4-methylsulfanyl-2-oxobutanoate + H2O2 + NH4(+). Its function is as follows. Catalyzes the oxidative deamination of D-amino acids with broad substrate specificity. Enables the organism to utilize D-amino acids as a source of nutrients. Enables the organism to utilize D-alanine as a nitrogen source, although it is not strictly required for this process. Also enables utilization of D-alanine as a carbon source. The protein is D-amino-acid oxidase of Candida boidinii (Yeast).